The following is a 545-amino-acid chain: CTP synthase (545 aa).

Positions 1–266 are amidoligase domain; that stretch reads MTTNYIFVTG…DDLVCARFGI (266 aa). A CTP-binding site is contributed by serine 14. Serine 14 is a binding site for UTP. ATP is bound by residues 15–20 and aspartate 72; that span reads SLGKGI. Aspartate 72 and glutamate 140 together coordinate Mg(2+). CTP-binding positions include 147–149, 187–192, and lysine 223; these read DIE and KTKPTQ. UTP is bound by residues 187-192 and lysine 223; that span reads KTKPTQ. An ATP-binding site is contributed by 239-241; that stretch reads KDV. The region spanning 291–542 is the Glutamine amidotransferase type-1 domain; that stretch reads TIGMVGKYIE…IKAAGENARG (252 aa). Glycine 352 contributes to the L-glutamine binding site. Catalysis depends on cysteine 379, which acts as the Nucleophile; for glutamine hydrolysis. L-glutamine is bound by residues 380–383, glutamate 403, and arginine 470; that span reads LGMQ. Residues histidine 515 and glutamate 517 contribute to the active site.

This sequence belongs to the CTP synthase family. As to quaternary structure, homotetramer.

The enzyme catalyses UTP + L-glutamine + ATP + H2O = CTP + L-glutamate + ADP + phosphate + 2 H(+). It catalyses the reaction L-glutamine + H2O = L-glutamate + NH4(+). It carries out the reaction UTP + NH4(+) + ATP = CTP + ADP + phosphate + 2 H(+). It participates in pyrimidine metabolism; CTP biosynthesis via de novo pathway; CTP from UDP: step 2/2. With respect to regulation, allosterically activated by GTP, when glutamine is the substrate; GTP has no effect on the reaction when ammonia is the substrate. The allosteric effector GTP functions by stabilizing the protein conformation that binds the tetrahedral intermediate(s) formed during glutamine hydrolysis. Inhibited by the product CTP, via allosteric rather than competitive inhibition. In terms of biological role, catalyzes the ATP-dependent amination of UTP to CTP with either L-glutamine or ammonia as the source of nitrogen. Regulates intracellular CTP levels through interactions with the four ribonucleotide triphosphates. This is CTP synthase from Vibrio vulnificus (strain CMCP6).